The primary structure comprises 131 residues: Lysosomal enzyme trafficking factor (131 aa).

The next 2 helical transmembrane spans lie at 8 to 28 (MGWIGVSLYLFVSAAAFYYVF) and 66 to 86 (LPFWLWAALFLIPYFQVFLFL).

The protein belongs to the LYSET family.

Its subcellular location is the golgi apparatus membrane. In terms of biological role, required for mannose-6-phosphate-dependent trafficking of lysosomal enzymes. LYSET bridges GlcNAc-1-phosphate transferase (GNPTAB), to the membrane-bound transcription factor site-1 protease (MBTPS1), thus allowing proteolytic activation of the GNPTAB. GNPTAB is involved in the regulation of M6P-dependent Golgi-to-lysosome trafficking of lysosomal enzymes. LYSET is thus an essential factor for maturation and delivery of lysosomal hydrolases. This Xenopus laevis (African clawed frog) protein is Lysosomal enzyme trafficking factor (lyset-b).